The primary structure comprises 522 residues: Na(+)/H(+) antiporter NhaB (522 aa).

The next 9 helical transmembrane spans lie at 13–33 (FLGNSPDWYKLAIMGFLIINP), 98–118 (LLLVFMVAGIYFMKQLLLFVF), 140–160 (AFLSAFLDALTVIAVVISVSV), 239–259 (FFIRMLPVTLPVFIFGLLVCL), 304–324 (AIIGVWLVLALHLAEVGLVGL), 356–376 (LTVFFAVVAVIIEQSLFTPII), 390–410 (LFYLFNGLLSSVSDNVFVGTV), 446–466 (ATPNGQAAFLFLLTSALAPLI), and 477–497 (ALPYTLVMTIVGLLGVEFLLV).

Belongs to the NhaB Na(+)/H(+) (TC 2.A.34) antiporter family.

Its subcellular location is the cell inner membrane. The enzyme catalyses 2 Na(+)(in) + 3 H(+)(out) = 2 Na(+)(out) + 3 H(+)(in). Functionally, na(+)/H(+) antiporter that extrudes sodium in exchange for external protons. This Yersinia pestis bv. Antiqua (strain Angola) protein is Na(+)/H(+) antiporter NhaB.